Reading from the N-terminus, the 238-residue chain is Ribosomal RNA small subunit methyltransferase G (238 aa).

S-adenosyl-L-methionine-binding positions include glycine 78, 129 to 130, and arginine 148; that span reads AE.

This sequence belongs to the methyltransferase superfamily. RNA methyltransferase RsmG family.

Its subcellular location is the cytoplasm. Functionally, specifically methylates the N7 position of a guanine in 16S rRNA. This Caldicellulosiruptor bescii (strain ATCC BAA-1888 / DSM 6725 / KCTC 15123 / Z-1320) (Anaerocellum thermophilum) protein is Ribosomal RNA small subunit methyltransferase G.